The following is a 386-amino-acid chain: WD repeat-containing protein 89 (386 aa).

6 WD repeats span residues 21–65 (KEPT…VIRE), 68–106 (GYPG…GKPV), 111–155 (GYPS…QDLS), 167–207 (THSD…EDDA), 213–253 (NSVS…TDEP), and 318–357 (GHAA…KTFT).

The chain is WD repeat-containing protein 89 (WDR89) from Bos taurus (Bovine).